Reading from the N-terminus, the 223-residue chain is Thymine-DNA glycosylase (223 aa).

4 residues coordinate [4Fe-4S] cluster: Cys-201, Cys-208, Cys-211, and Cys-217.

This sequence belongs to the Nth/MutY family. [4Fe-4S] cluster is required as a cofactor.

The catalysed reaction is Hydrolyzes mismatched double-stranded DNA and polynucleotides, releasing free thymine.. Its activity is regulated as follows. Thymine cleavage is completely inhibited by Ni(2+), Co(2+), Zn(2+), Cu(2+) and Mn(2+). Activity is not affected by Mg(2+) and Ca(2+). In terms of biological role, DNA glycosylase that excises thymine from T/G mismatches. Also has a weak DNA glycosylase activity on uracil paired with various bases. The polypeptide is Thymine-DNA glycosylase (Aeropyrum pernix (strain ATCC 700893 / DSM 11879 / JCM 9820 / NBRC 100138 / K1)).